The chain runs to 404 residues: Cysteine desulfurase IscS (404 aa).

Pyridoxal 5'-phosphate-binding positions include 75–76, N155, Q183, and 203–205; these read AT and SGH. K206 carries the post-translational modification N6-(pyridoxal phosphate)lysine. T243 is a pyridoxal 5'-phosphate binding site. C328 serves as the catalytic Cysteine persulfide intermediate. Residue C328 participates in [2Fe-2S] cluster binding.

The protein belongs to the class-V pyridoxal-phosphate-dependent aminotransferase family. NifS/IscS subfamily. In terms of assembly, homodimer. Forms a heterotetramer with IscU, interacts with other sulfur acceptors. Requires pyridoxal 5'-phosphate as cofactor.

Its subcellular location is the cytoplasm. It carries out the reaction (sulfur carrier)-H + L-cysteine = (sulfur carrier)-SH + L-alanine. It functions in the pathway cofactor biosynthesis; iron-sulfur cluster biosynthesis. In terms of biological role, master enzyme that delivers sulfur to a number of partners involved in Fe-S cluster assembly, tRNA modification or cofactor biosynthesis. Catalyzes the removal of elemental sulfur atoms from cysteine to produce alanine. Functions as a sulfur delivery protein for Fe-S cluster synthesis onto IscU, an Fe-S scaffold assembly protein, as well as other S acceptor proteins. This Shewanella putrefaciens (strain CN-32 / ATCC BAA-453) protein is Cysteine desulfurase IscS.